The primary structure comprises 82 residues: Putative membrane protein insertion efficiency factor (82 aa).

It belongs to the UPF0161 family.

It localises to the cell inner membrane. In terms of biological role, could be involved in insertion of integral membrane proteins into the membrane. The polypeptide is Putative membrane protein insertion efficiency factor (Rickettsia typhi (strain ATCC VR-144 / Wilmington)).